The sequence spans 316 residues: tRNA dimethylallyltransferase (316 aa).

17-24 (GPTASGKT) contributes to the ATP binding site. 19–24 (TASGKT) is a binding site for substrate. Interaction with substrate tRNA stretches follow at residues 42 to 45 (DSAL), 166 to 170 (QRLSR), 247 to 252 (RCVGYR), and 280 to 287 (KRQITWLR).

Belongs to the IPP transferase family. As to quaternary structure, monomer. Mg(2+) serves as cofactor.

The enzyme catalyses adenosine(37) in tRNA + dimethylallyl diphosphate = N(6)-dimethylallyladenosine(37) in tRNA + diphosphate. Functionally, catalyzes the transfer of a dimethylallyl group onto the adenine at position 37 in tRNAs that read codons beginning with uridine, leading to the formation of N6-(dimethylallyl)adenosine (i(6)A). This chain is tRNA dimethylallyltransferase, found in Enterobacter sp. (strain 638).